A 510-amino-acid chain; its full sequence is Lysine--tRNA ligase (510 aa).

2 residues coordinate Mg(2+): Glu-420 and Glu-427.

This sequence belongs to the class-II aminoacyl-tRNA synthetase family. In terms of assembly, homodimer. Mg(2+) serves as cofactor.

It localises to the cytoplasm. It catalyses the reaction tRNA(Lys) + L-lysine + ATP = L-lysyl-tRNA(Lys) + AMP + diphosphate. The chain is Lysine--tRNA ligase from Vibrio campbellii (strain ATCC BAA-1116).